The following is a 626-amino-acid chain: MSTNQETRGFQSEVKQLLQLMIHSLYSNKEIFLRELISNASDAADKLRFKALSNPDLYAGDGELRVCISFDSEKGTLTVSDNGIGMTREQVIDHLGTIAKSGTKEFLAALGSDQAKDSQLIGQFGVGFYSAFIVADKVTVKTRAAGEPADKGVLWESAGEGDYTVADIEKKSRGTDVILHLRDDEKEFLNEWRLRGIIGKYSDHIGLPVEMLTKEYEDEGKEIGEKWEKINKSDALWTRSKNEISDEEYKEFYKHLSHDFADPLLWAHNKVEGNQEYTSLLYVPSKAPWDLFNREHKHGLKLYVQRVFIMDDAEQFMPNYLRFMRGLIDSNDLPLNVSREILQDNKVTAALRKALTKRSLQMLEKLAKDDAEKYQQFWKEFGLVLKEGPAEDFANKEAIAKLLRFASTHNDSSEQNVSLEDYVSRMKEGQKAIYYITADSYVAARNSPHLELFNKKGIEVLLLSDRIDEWMLSYLTEFDGKPLQSITKADLDLGDLADKEAEEQKAQDESFGSFVERVKTLLGGRVKEVRLTHRLTDTPAVVSTDNDQMTTQMAKLFAAAGQPVPEVKYTFELNPEHHLVKKVAEIADEAQFADWVELLLEQAMLAERGSLENPAAFIKRINKLLG.

The interval 1-339 (MSTNQETRGF…SNDLPLNVSR (339 aa)) is a; substrate-binding. The interval 340–555 (EILQDNKVTA…NDQMTTQMAK (216 aa)) is b. The tract at residues 556–626 (LFAAAGQPVP…FIKRINKLLG (71 aa)) is c.

It belongs to the heat shock protein 90 family. In terms of assembly, homodimer.

It localises to the cytoplasm. In terms of biological role, molecular chaperone. Has ATPase activity. The polypeptide is Chaperone protein HtpG (Aggregatibacter actinomycetemcomitans (Actinobacillus actinomycetemcomitans)).